The following is a 312-amino-acid chain: uncharacterized protein (312 aa).

The next 2 membrane-spanning stretches (helical) occupy residues 4–24 (AIYLLILCIFGLFSVYFTYAE) and 286–306 (YLLSFIGIIIGFGIIGLAIYL).

The protein localises to the cell membrane. This is an uncharacterized protein from Methanocaldococcus jannaschii (strain ATCC 43067 / DSM 2661 / JAL-1 / JCM 10045 / NBRC 100440) (Methanococcus jannaschii).